We begin with the raw amino-acid sequence, 135 residues long: Large ribosomal subunit protein uL16c (135 aa).

It belongs to the universal ribosomal protein uL16 family. In terms of assembly, part of the 50S ribosomal subunit.

The protein localises to the plastid. Its subcellular location is the chloroplast. The sequence is that of Large ribosomal subunit protein uL16c from Drimys granadensis.